The chain runs to 90 residues: Co-chaperonin GroES (90 aa).

Belongs to the GroES chaperonin family. In terms of assembly, heptamer of 7 subunits arranged in a ring. Interacts with the chaperonin GroEL.

The protein resides in the cytoplasm. In terms of biological role, together with the chaperonin GroEL, plays an essential role in assisting protein folding. The GroEL-GroES system forms a nano-cage that allows encapsulation of the non-native substrate proteins and provides a physical environment optimized to promote and accelerate protein folding. GroES binds to the apical surface of the GroEL ring, thereby capping the opening of the GroEL channel. The chain is Co-chaperonin GroES from Fusobacterium nucleatum subsp. polymorphum (Fusobacterium polymorphum).